The sequence spans 21 residues: Agglutinin beta-1 chain (21 aa).

The span at 1 to 10 shows a compositional bias: polar residues; it reads NGPNGKSQSI. Residues 1–21 are disordered; the sequence is NGPNGKSQSIIVGPWGDRVTN.

It belongs to the jacalin lectin family. Formed of four alpha chains and four beta chains.

In terms of biological role, D-galactose-specific lectin, binds the T-antigen structure Gal-beta1,3-GalNAc. This is Agglutinin beta-1 chain from Maclura pomifera (Osage orange).